The sequence spans 140 residues: General stress protein 26 (140 aa).

The polypeptide is General stress protein 26 (ydaG) (Bacillus subtilis (strain 168)).